A 182-amino-acid polypeptide reads, in one-letter code: Epididymal-specific lipocalin-10 (182 aa).

Residues 1–19 (MKLEMALSIALALAVVSWT) form the signal peptide. Asn31 and Asn144 each carry an N-linked (GlcNAc...) asparagine glycan. An intrachain disulfide couples Cys85 to Cys176. At Lys165 the chain carries N6-acetyllysine.

This sequence belongs to the calycin superfamily. Lipocalin family. As to expression, expressed in epididymis.

The protein localises to the secreted. Its function is as follows. May play a role in male fertility. May act as a retinoid carrier protein within the epididymis. The protein is Epididymal-specific lipocalin-10 (Lcn10) of Mus musculus (Mouse).